Here is a 464-residue protein sequence, read N- to C-terminus: tRNA-2-methylthio-N(6)-dimethylallyladenosine synthase (464 aa).

An MTTase N-terminal domain is found at 19–135; sequence GSYWITTFGC…LENLLERVDS (117 aa). [4Fe-4S] cluster-binding residues include Cys-28, Cys-64, Cys-98, Cys-170, Cys-174, and Cys-177. Positions 156–393 constitute a Radical SAM core domain; sequence RDSTICGWVN…NELVEATSRK (238 aa). A TRAM domain is found at 396-464; the sequence is QRYLNNTESV…SFSLSGQIYK (69 aa).

Belongs to the methylthiotransferase family. MiaB subfamily. As to quaternary structure, monomer. Requires [4Fe-4S] cluster as cofactor.

Its subcellular location is the cytoplasm. It catalyses the reaction N(6)-dimethylallyladenosine(37) in tRNA + (sulfur carrier)-SH + AH2 + 2 S-adenosyl-L-methionine = 2-methylsulfanyl-N(6)-dimethylallyladenosine(37) in tRNA + (sulfur carrier)-H + 5'-deoxyadenosine + L-methionine + A + S-adenosyl-L-homocysteine + 2 H(+). Catalyzes the methylthiolation of N6-(dimethylallyl)adenosine (i(6)A), leading to the formation of 2-methylthio-N6-(dimethylallyl)adenosine (ms(2)i(6)A) at position 37 in tRNAs that read codons beginning with uridine. This is tRNA-2-methylthio-N(6)-dimethylallyladenosine synthase from Prochlorococcus marinus (strain MIT 9515).